The following is a 252-amino-acid chain: 3-deoxy-manno-octulosonate cytidylyltransferase 2 (252 aa).

The protein belongs to the KdsB family.

It is found in the cytoplasm. It catalyses the reaction 3-deoxy-alpha-D-manno-oct-2-ulosonate + CTP = CMP-3-deoxy-beta-D-manno-octulosonate + diphosphate. The protein operates within nucleotide-sugar biosynthesis; CMP-3-deoxy-D-manno-octulosonate biosynthesis; CMP-3-deoxy-D-manno-octulosonate from 3-deoxy-D-manno-octulosonate and CTP: step 1/1. It functions in the pathway bacterial outer membrane biogenesis; lipopolysaccharide biosynthesis. Activates KDO (a required 8-carbon sugar) for incorporation into bacterial lipopolysaccharide in Gram-negative bacteria. In Actinobacillus pleuropneumoniae serotype 5b (strain L20), this protein is 3-deoxy-manno-octulosonate cytidylyltransferase 2.